Reading from the N-terminus, the 695-residue chain is Protein MALE DISCOVERER 1 (695 aa).

A signal peptide spans methionine 1–serine 29. The Extracellular portion of the chain corresponds to leucine 30–tyrosine 340. Residues asparagine 56 and asparagine 80 are each glycosylated (N-linked (GlcNAc...) asparagine). LRR repeat units lie at residues lysine 75–serine 98, glutamate 99–phenylalanine 121, lysine 123–lysine 144, and threonine 147–arginine 168. Asparagine 247 is a glycosylation site (N-linked (GlcNAc...) asparagine). The disordered stretch occupies residues proline 302 to arginine 325. Residues proline 303–proline 314 show a composition bias toward pro residues. An N-linked (GlcNAc...) asparagine glycan is attached at asparagine 316. Residues valine 341–phenylalanine 361 traverse the membrane as a helical segment. The Cytoplasmic segment spans residues arginine 362–threonine 695. The region spanning lysine 363–isoleucine 668 is the Protein kinase domain. Serine 652 is modified (phosphoserine).

Belongs to the protein kinase superfamily. Ser/Thr protein kinase family. In terms of assembly, homodimer. Interacts with MIK1, MIK2 and LURE1.2. LURE1.2 enhances the heterodimerization of MDIS1 with MIK1 or MIK2. In terms of processing, phosphorylated by MIK1. In terms of tissue distribution, expressed in pollen tubes and seedlings.

It is found in the cell membrane. The protein localises to the endomembrane system. It carries out the reaction L-seryl-[protein] + ATP = O-phospho-L-seryl-[protein] + ADP + H(+). It catalyses the reaction L-threonyl-[protein] + ATP = O-phospho-L-threonyl-[protein] + ADP + H(+). In terms of biological role, involved in the pollen tube perception of the female signal. This chain is Protein MALE DISCOVERER 1, found in Arabidopsis thaliana (Mouse-ear cress).